The sequence spans 267 residues: Membrane-spanning 4-domains subfamily A member 12 (267 aa).

Residues 1–91 (MMSSKPTSHA…MNFKEEAKAL (91 aa)) lie on the Cytoplasmic side of the membrane. A helical transmembrane segment spans residues 92 to 112 (GVIQIMVGLMHIGFGIVLCLI). Topologically, residues 113 to 120 (SFSFREVL) are extracellular. The helical transmembrane segment at 121–141 (GFASTAVIGGYPFWGGLSFII) threads the bilayer. The Cytoplasmic portion of the chain corresponds to 142 to 160 (SGSLSVSASKELSRCLVKG). Residues 161–181 (SLGMNIVSSILAFIGVILLLV) form a helical membrane-spanning segment. At 182 to 200 (DMCINGVAGQDYWAVLSGK) the chain is on the extracellular side. Residues 201–221 (GISATLMIFSLLEFFVACATA) form a helical membrane-spanning segment. The Cytoplasmic segment spans residues 222–267 (HFANQANTTTNMSVLVIPNMYESNPVTPASSSAPPRCNNYSANAPK). The tract at residues 248 to 267 (TPASSSAPPRCNNYSANAPK) is disordered.

Belongs to the MS4A family.

Its subcellular location is the membrane. May be involved in signal transduction as a component of a multimeric receptor complex. The polypeptide is Membrane-spanning 4-domains subfamily A member 12 (MS4A12) (Homo sapiens (Human)).